The following is a 534-amino-acid chain: DM7 family protein GE17491 (534 aa).

This sequence belongs to the DM7 family.

This chain is DM7 family protein GE17491, found in Drosophila yakuba (Fruit fly).